The following is a 178-amino-acid chain: Crossover junction endodeoxyribonuclease RuvC (178 aa).

Residues Asp21, Glu81, and His154 contribute to the active site. Mg(2+)-binding residues include Asp21, Glu81, and His154.

The protein belongs to the RuvC family. As to quaternary structure, homodimer which binds Holliday junction (HJ) DNA. The HJ becomes 2-fold symmetrical on binding to RuvC with unstacked arms; it has a different conformation from HJ DNA in complex with RuvA. In the full resolvosome a probable DNA-RuvA(4)-RuvB(12)-RuvC(2) complex forms which resolves the HJ. Requires Mg(2+) as cofactor.

It localises to the cytoplasm. The catalysed reaction is Endonucleolytic cleavage at a junction such as a reciprocal single-stranded crossover between two homologous DNA duplexes (Holliday junction).. Functionally, the RuvA-RuvB-RuvC complex processes Holliday junction (HJ) DNA during genetic recombination and DNA repair. Endonuclease that resolves HJ intermediates. Cleaves cruciform DNA by making single-stranded nicks across the HJ at symmetrical positions within the homologous arms, yielding a 5'-phosphate and a 3'-hydroxyl group; requires a central core of homology in the junction. The consensus cleavage sequence is 5'-(A/T)TT(C/G)-3'. Cleavage occurs on the 3'-side of the TT dinucleotide at the point of strand exchange. HJ branch migration catalyzed by RuvA-RuvB allows RuvC to scan DNA until it finds its consensus sequence, where it cleaves and resolves the cruciform DNA. The polypeptide is Crossover junction endodeoxyribonuclease RuvC (Treponema denticola (strain ATCC 35405 / DSM 14222 / CIP 103919 / JCM 8153 / KCTC 15104)).